The sequence spans 270 residues: Tryptophan synthase alpha chain (270 aa).

Active-site proton acceptor residues include E49 and D60.

This sequence belongs to the TrpA family. Tetramer of two alpha and two beta chains.

The catalysed reaction is (1S,2R)-1-C-(indol-3-yl)glycerol 3-phosphate + L-serine = D-glyceraldehyde 3-phosphate + L-tryptophan + H2O. Its pathway is amino-acid biosynthesis; L-tryptophan biosynthesis; L-tryptophan from chorismate: step 5/5. Functionally, the alpha subunit is responsible for the aldol cleavage of indoleglycerol phosphate to indole and glyceraldehyde 3-phosphate. The sequence is that of Tryptophan synthase alpha chain from Thermobifida fusca (strain YX).